Here is a 429-residue protein sequence, read N- to C-terminus: Tyrosine--tRNA ligase (429 aa).

Residue tyrosine 36 participates in L-tyrosine binding. Positions 41–50 (PTAASLHAGH) match the 'HIGH' region motif. Tyrosine 171 and glutamine 175 together coordinate L-tyrosine. The 'KMSKS' region signature appears at 231–235 (KFGKS). Position 234 (lysine 234) interacts with ATP. An S4 RNA-binding domain is found at 360 to 417 (ATIVDLLVATGLAESRGAARRTVNEGGAAVNNQKIADPDWTPADGDYLHGRWLVVRRG).

The protein belongs to the class-I aminoacyl-tRNA synthetase family. TyrS type 1 subfamily. In terms of assembly, homodimer.

Its subcellular location is the cytoplasm. The enzyme catalyses tRNA(Tyr) + L-tyrosine + ATP = L-tyrosyl-tRNA(Tyr) + AMP + diphosphate + H(+). Functionally, catalyzes the attachment of tyrosine to tRNA(Tyr) in a two-step reaction: tyrosine is first activated by ATP to form Tyr-AMP and then transferred to the acceptor end of tRNA(Tyr). The chain is Tyrosine--tRNA ligase from Nocardia farcinica (strain IFM 10152).